The sequence spans 142 residues: uncharacterized protein (142 aa).

This is an uncharacterized protein from Caenorhabditis elegans.